The chain runs to 127 residues: Aspartate 1-decarboxylase (127 aa).

The active-site Schiff-base intermediate with substrate; via pyruvic acid is serine 25. Residue serine 25 is modified to Pyruvic acid (Ser). Threonine 57 serves as a coordination point for substrate. The active-site Proton donor is the tyrosine 58. Residue 73–75 (GAA) coordinates substrate.

This sequence belongs to the PanD family. As to quaternary structure, heterooctamer of four alpha and four beta subunits. It depends on pyruvate as a cofactor. In terms of processing, is synthesized initially as an inactive proenzyme, which is activated by self-cleavage at a specific serine bond to produce a beta-subunit with a hydroxyl group at its C-terminus and an alpha-subunit with a pyruvoyl group at its N-terminus.

The protein localises to the cytoplasm. The enzyme catalyses L-aspartate + H(+) = beta-alanine + CO2. Its pathway is cofactor biosynthesis; (R)-pantothenate biosynthesis; beta-alanine from L-aspartate: step 1/1. Its function is as follows. Catalyzes the pyruvoyl-dependent decarboxylation of aspartate to produce beta-alanine. The polypeptide is Aspartate 1-decarboxylase (Neisseria meningitidis serogroup A / serotype 4A (strain DSM 15465 / Z2491)).